We begin with the raw amino-acid sequence, 307 residues long: tRNA dimethylallyltransferase 2 (307 aa).

An ATP-binding site is contributed by 9 to 16; the sequence is GPTAVGKT. 11 to 16 serves as a coordination point for substrate; it reads TAVGKT. The segment at 34–37 is interaction with substrate tRNA; it reads DSRQ.

The protein belongs to the IPP transferase family. In terms of assembly, monomer. Mg(2+) serves as cofactor.

The catalysed reaction is adenosine(37) in tRNA + dimethylallyl diphosphate = N(6)-dimethylallyladenosine(37) in tRNA + diphosphate. Catalyzes the transfer of a dimethylallyl group onto the adenine at position 37 in tRNAs that read codons beginning with uridine, leading to the formation of N6-(dimethylallyl)adenosine (i(6)A). This is tRNA dimethylallyltransferase 2 from Azobacteroides pseudotrichonymphae genomovar. CFP2.